Consider the following 1006-residue polypeptide: Transcription factor tau subunit sfc4 (1006 aa).

The tract at residues 64 to 91 is disordered; it reads GLWSDEESDYEGSDDESNFSKTASRTED. A compositionally biased stretch (acidic residues) spans 66–80; that stretch reads WSDEESDYEGSDDES. TPR repeat units lie at residues 133–166, 205–238, 277–310, 396–429, 431–464, and 466–499; these read QQMLSLANHLFAQEGNFDEAQKLAEEIVRIDNNV, HELWFTCAKLSESLEFWDQADYCYNRAVSAKPPN, ASILKNLAEIYIKIHAPREILKQFEIAWKYFYQY, HLFRTKLGIARLKTGELPEAELHFSVIKNLPPDY, WGMLYDIAKAYMDIERLDLALEYFVLICNHEPAQ, and IGLWYNMGVCYLELKEYEHAQQCMEAILIVDNSN. A coiled-coil region spans residues 506-554; the sequence is LAEINELQDNRDAALEIVTNIFEQRRNINELEREQSQNEDHEKNVGSQL. TPR repeat units follow at residues 841–874 and 924–957; these read PVLVLLYGHIMARNRSWIPAINYYSRAFAINPDC and QEALYNLGKAYHFIGLEHYAVKYYEAVLGLSPMS.

As to quaternary structure, component of the TFIIIC complex including sfc1, sfc3, sfc4, sfc6 and sfc7. The subunits are organized in two globular domains, tauA and tauB, connected by a proteolysis-sensitive and flexible linker. Interacts with sfc1, sfc3 and sfc6. In terms of processing, phosphorylated.

The protein localises to the nucleus. Functionally, TFIIIC mediates tRNA and 5S RNA gene activation by binding to intragenic promoter elements. Upstream of the transcription start site, TFIIIC assembles the initiation complex TFIIIB-TFIIIC-tDNA, which is sufficient for RNA polymerase III recruitment and function. Part of the tauA domain of TFIIIC that binds boxA DNA promoter sites of tRNA and similar genes. Sfc4 is the TFIIIB assembling subunit of TFIIIC. This chain is Transcription factor tau subunit sfc4, found in Schizosaccharomyces pombe (strain 972 / ATCC 24843) (Fission yeast).